The chain runs to 644 residues: Acetolactate synthase 1, chloroplastic (644 aa).

The transit peptide at 1-43 directs the protein to the chloroplast; that stretch reads MATTAAAAAAALSAAATAKTGRKNHQRHHVLPARGRVGAAAVR. The disordered stretch occupies residues 47 to 67; it reads VSPVTPPSPAPPATPLRPWGP. A compositionally biased stretch (pro residues) spans 50 to 61; it reads VTPPSPAPPATP. Thiamine diphosphate is bound at residue Glu118. A disulfide bridge links Cys138 with Cys284. Residues Arg220, 326–347, and 369–388 contribute to the FAD site; these read HGTVYANYAVDKADLLLAFGVR and DIDPAEIGKNKQPHVSICAD. The interval 461 to 541 is thiamine pyrophosphate binding; sequence QHQMWAAQYY…VKVMVLNNQH (81 aa). Mg(2+) contacts are provided by Asp512 and Asn539.

The protein belongs to the TPP enzyme family. Requires Mg(2+) as cofactor. Thiamine diphosphate serves as cofactor.

The protein resides in the plastid. It is found in the chloroplast. The enzyme catalyses 2 pyruvate + H(+) = (2S)-2-acetolactate + CO2. It functions in the pathway amino-acid biosynthesis; L-isoleucine biosynthesis; L-isoleucine from 2-oxobutanoate: step 1/4. Its pathway is amino-acid biosynthesis; L-valine biosynthesis; L-valine from pyruvate: step 1/4. The chain is Acetolactate synthase 1, chloroplastic (ALS1) from Oryza sativa subsp. japonica (Rice).